The sequence spans 209 residues: Kynurenine formamidase (209 aa).

A substrate-binding site is contributed by F18. Positions 48, 52, and 54 each coordinate Zn(2+). H58 (proton donor/acceptor) is an active-site residue. 2 residues coordinate Zn(2+): H160 and E172.

The protein belongs to the Cyclase 1 superfamily. KynB family. Homodimer. Zn(2+) is required as a cofactor.

It carries out the reaction N-formyl-L-kynurenine + H2O = L-kynurenine + formate + H(+). It participates in amino-acid degradation; L-tryptophan degradation via kynurenine pathway; L-kynurenine from L-tryptophan: step 2/2. Functionally, catalyzes the hydrolysis of N-formyl-L-kynurenine to L-kynurenine, the second step in the kynurenine pathway of tryptophan degradation. The sequence is that of Kynurenine formamidase from Bordetella petrii (strain ATCC BAA-461 / DSM 12804 / CCUG 43448).